The primary structure comprises 595 residues: DNA mismatch repair protein MutL (595 aa).

This sequence belongs to the DNA mismatch repair MutL/HexB family.

In terms of biological role, this protein is involved in the repair of mismatches in DNA. It is required for dam-dependent methyl-directed DNA mismatch repair. May act as a 'molecular matchmaker', a protein that promotes the formation of a stable complex between two or more DNA-binding proteins in an ATP-dependent manner without itself being part of a final effector complex. The sequence is that of DNA mismatch repair protein MutL from Rhodopseudomonas palustris (strain ATCC BAA-98 / CGA009).